The primary structure comprises 464 residues: Soluble pyridine nucleotide transhydrogenase (464 aa).

35–44 (DSRRQVGGNC) provides a ligand contact to FAD.

Belongs to the class-I pyridine nucleotide-disulfide oxidoreductase family. The cofactor is FAD.

Its subcellular location is the cytoplasm. The catalysed reaction is NAD(+) + NADPH = NADH + NADP(+). Functionally, conversion of NADPH, generated by peripheral catabolic pathways, to NADH, which can enter the respiratory chain for energy generation. This chain is Soluble pyridine nucleotide transhydrogenase, found in Pseudomonas syringae pv. syringae (strain B728a).